The following is a 92-amino-acid chain: Islet amyloid polypeptide (92 aa).

Residues 1 to 22 (MHISKLPAALLIFSVALNHLKA) form the signal peptide. A propeptide spanning residues 23–34 (TPVRSGTNHQMD) is cleaved from the precursor. Cysteines 38 and 43 form a disulfide. At tyrosine 73 the chain carries Tyrosine amide. Positions 77–92 (SAAEIPDGDSLDLFLL) are excised as a propeptide.

Belongs to the calcitonin family. In terms of assembly, can form homodimers. Interacts with IDE and INS. Interaction with INS inhibits homodimerization and fibril formation.

It localises to the secreted. Functionally, amylin/IAPP is a glucoregulatory peptide hormone that plays an important role in the regulation of energy homeostasis. Selectively inhibits insulin-stimulated glucose utilization and glycogen deposition in muscle, while not affecting adipocyte glucose metabolism. IAPP function is mediated by the CALCR-RAMPs (AMYRs) receptor complexes. Amylin can also bind CALCR receptor in the absence of RAMPs, although it is more selective for AMYRs. The protein is Islet amyloid polypeptide (IAPP) of Mesocricetus auratus (Golden hamster).